A 502-amino-acid chain; its full sequence is MEKFQGYLEFDGARQQSFLYPLFFREYIYVLAYDHGLNRLNRNRSIFLENADYDKKYSSLIVKRLILRMYEQNRLIIPTKDLNKNLGHTNLFYYQMISVLFAVIVEIPFSLRLGSSVEGKKLKKSSNLQSIHSIFPFLEDKFSHFNYVLDVLIPYPIHLEILVQTLRYRVKDASSLHFFRFCLYEYCNWKNFDSKKKSILNPRFLLFLYNSHVCEYESIFLFLRKRSSHLRSTSYEVFFERILFYGKIQHFLKVFINNFPSILGLFKDPFLHYVRYHGKCILATKDTPLLMNKWKYYFVNLWQCYFFVWFKSQRVNINQLSKDNLKFLGYLSSLRLNPLVDRSQMLENSFLIDNVRIKLDSKIPIYSIIGSLAKNKFCNVLGHPISKATWTDSSDSDILNRFVRICRNISHYYSGSSKKKNLYRIKYILRLCCVKTLARKHKSTVRAFLKRLGSGLLEEFLTGEDQVLSLIFPRSDYASKRLYRVRVWYLDILYLNDLVNHE.

This sequence belongs to the intron maturase 2 family. MatK subfamily.

The protein resides in the plastid. Its subcellular location is the chloroplast. In terms of biological role, usually encoded in the trnK tRNA gene intron. Probably assists in splicing its own and other chloroplast group II introns. This is Maturase K from Stanleya pinnata (Prince's plume).